Consider the following 647-residue polypeptide: Protein cueball (647 aa).

A signal peptide spans 1–22; the sequence is MLWCPSVLVPLIAVAACLPVLA. Over 23 to 534 the chain is Extracellular; the sequence is IGTPLEWEFA…CMTPSPWTSN (512 aa). N-linked (GlcNAc...) asparagine glycans are attached at residues N80 and N106. LDL-receptor class B repeat units lie at residues 119-166, 167-211, and 212-257; these read RNLF…DVCR, RKLY…DQLS, and DRIF…TNDA. N-linked (GlcNAc...) asparagine glycosylation occurs at N175. A glycan (N-linked (GlcNAc...) asparagine) is linked at N316. EGF-like domains follow at residues 365 to 401 and 436 to 473; these read DEKT…SRCE and EISK…ERCE. Disulfide bonds link C376-C389, C391-C400, C440-C450, C444-C461, and C463-C472. A glycan (N-linked (GlcNAc...) asparagine) is linked at N475. The helical transmembrane segment at 535 to 555 threads the bilayer; the sequence is VIIVLVLGIVSCFFLVAVIVH. Residues 556-647 are Cytoplasmic-facing; the sequence is GFRRLYKPKR…LIHNMDDDLY (92 aa).

This sequence belongs to the cueball family.

It localises to the cell membrane. Functionally, has a role in spermatogenesis and oogenesis. The protein is Protein cueball of Drosophila pseudoobscura pseudoobscura (Fruit fly).